We begin with the raw amino-acid sequence, 338 residues long: Terpene synthase 1 (338 aa).

A DDxx(x)D/E motif motif is present at residues 80–85 (DDALDS). The NDxxSxxxD/E motif signature appears at 220–228 (NDLVSYEKE).

Belongs to the terpene synthase family.

It catalyses the reaction (2E,6E)-farnesyl diphosphate = (2S,3R,6S,9S)-(-)-protoillud-7-ene + diphosphate. Functionally, terpene synthase that converts its substrate farnesyl diphosphate (FPP) into the sesquiterpene protoillud-7-ene. This is Terpene synthase 1 from Cavenderia fasciculata (Slime mold).